Reading from the N-terminus, the 130-residue chain is Small ribosomal subunit protein uS9 (130 aa).

The protein belongs to the universal ribosomal protein uS9 family.

The polypeptide is Small ribosomal subunit protein uS9 (rpsI) (Shigella flexneri).